The primary structure comprises 584 residues: Alkaline nuclease (584 aa).

The interval 409–430 (GGGADHHLRGSPGDSPPPIPFE) is disordered.

This sequence belongs to the herpesviridae alkaline nuclease family. Interacts with major DNA-binding protein; this interaction increases the nuclease processivity of the alkaline exonuclease.

The protein resides in the host nucleus. The protein localises to the host cytoplasm. Functionally, plays a role in processing non linear or branched viral DNA intermediates in order to promote the production of mature packaged unit-length linear progeny viral DNA molecules. Exhibits endonuclease and exonuclease activities and accepts both double-stranded and single-stranded DNA as substrate. Exonuclease digestion of DNA is in the 5'-&gt; 3' direction and the products are 5'-monophosphate nucleosides. Additionally, forms a recombinase with the major DNA-binding protein, which displays strand exchange activity. The polypeptide is Alkaline nuclease (UL98) (Human cytomegalovirus (strain AD169) (HHV-5)).